The following is a 326-amino-acid chain: Acetyl-coenzyme A carboxylase carboxyl transferase subunit alpha (326 aa).

Residues 44–298 form the CoA carboxyltransferase C-terminal domain; it reads QLESRAEQLR…KEALLFHLNT (255 aa).

The protein belongs to the AccA family. In terms of assembly, acetyl-CoA carboxylase is a heterohexamer composed of biotin carboxyl carrier protein (AccB), biotin carboxylase (AccC) and two subunits each of ACCase subunit alpha (AccA) and ACCase subunit beta (AccD).

The protein resides in the cytoplasm. It carries out the reaction N(6)-carboxybiotinyl-L-lysyl-[protein] + acetyl-CoA = N(6)-biotinyl-L-lysyl-[protein] + malonyl-CoA. It participates in lipid metabolism; malonyl-CoA biosynthesis; malonyl-CoA from acetyl-CoA: step 1/1. Functionally, component of the acetyl coenzyme A carboxylase (ACC) complex. First, biotin carboxylase catalyzes the carboxylation of biotin on its carrier protein (BCCP) and then the CO(2) group is transferred by the carboxyltransferase to acetyl-CoA to form malonyl-CoA. This chain is Acetyl-coenzyme A carboxylase carboxyl transferase subunit alpha, found in Synechocystis sp. (strain ATCC 27184 / PCC 6803 / Kazusa).